Consider the following 842-residue polypeptide: Outer membrane usher protein AggC (842 aa).

A signal peptide spans 1-21 (MKTSSFIIVILLCFRIENVIA). C819 and C841 form a disulfide bridge.

The protein belongs to the fimbrial export usher family.

The protein localises to the cell outer membrane. Its function is as follows. Involved in the export and assembly of the AAF/I fimbriae subunits across the outer membrane. This Escherichia coli protein is Outer membrane usher protein AggC (aggC).